The following is a 314-amino-acid chain: CD-NTase-associated protein 12 (314 aa).

Positions 5-129 (RIFIGSSSEE…VKGISLARFK (125 aa)) constitute a TIR domain. The interval 160-314 (SSTLAAVYYE…DLIKIVDEDN (155 aa)) is STING domain. 3',3'-c-di-GMP contacts are provided by phenylalanine 171, proline 234, and aspartate 252.

The protein in the C-terminal section; belongs to the bacterial STING family. As to quaternary structure, homodimer. Forms homodimers; in the presence of c-di-GMP forms filaments with an ordered array of parallel-stacked subunits.

It catalyses the reaction NAD(+) + H2O = ADP-D-ribose + nicotinamide + H(+). Its activity is regulated as follows. NAD(+) hydrolase activity is strongly stimulated by c-di-GMP, weakly by 3'3'-cGAMP, very weakly by c-di-AMP but not at all by 2'3'-cGAMP. Self-association of TIR domains is required for NADase activity. Effector protein of a CBASS antiviral system with NAD(+) hydrolase activity. CBASS (cyclic oligonucleotide-based antiphage signaling system) provides immunity against bacteriophage. The CD-NTase protein synthesizes cyclic nucleotides in response to infection; these serve as specific second messenger signals. The signals activate a diverse range of effectors, leading to bacterial cell death and thus abortive phage infection. A type I-(GG) CBASS system. In terms of biological role, binds c-di-GMP (synthesized by the cognate CdnE encoded upstream in the same operon), and about 10-fold less well 3'3'-cGAMP, but not c-di-AMP, 2'-3'-cGAMP or cUMP-AMP (tested without the N-terminal TIR domain). Upon activation by c-di-GMP forms filaments which hydrolyze NAD(+); filament formation is required for enzyme activation. This chain is CD-NTase-associated protein 12, found in Capnocytophaga granulosa (strain ATCC 51502 / DSM 11449 / JCM 8566 / LMG 16022 / NCTC 12948 / B0611).